The primary structure comprises 1357 residues: DNA-directed RNA polymerase subunit beta (1357 aa).

The protein belongs to the RNA polymerase beta chain family. The RNAP catalytic core consists of 2 alpha, 1 beta, 1 beta' and 1 omega subunit. When a sigma factor is associated with the core the holoenzyme is formed, which can initiate transcription.

It carries out the reaction RNA(n) + a ribonucleoside 5'-triphosphate = RNA(n+1) + diphosphate. In terms of biological role, DNA-dependent RNA polymerase catalyzes the transcription of DNA into RNA using the four ribonucleoside triphosphates as substrates. The sequence is that of DNA-directed RNA polymerase subunit beta from Pseudomonas savastanoi pv. phaseolicola (strain 1448A / Race 6) (Pseudomonas syringae pv. phaseolicola (strain 1448A / Race 6)).